Here is a 258-residue protein sequence, read N- to C-terminus: (S)-hydroxynitrile lyase (258 aa).

Residues 5 to 242 enclose the AB hydrolase-1 domain; that stretch reads HFVLIHTICH…GGDHKLQLTK (238 aa). Residues Thr11 and Ser80 each contribute to the 2-hydroxy-2-methylpropanenitrile site. Thr11, Ser80, and Cys81 together coordinate acetone. The active-site Proton donor/acceptor is the Ser80. Residue His236 is the Proton donor/acceptor of the active site.

Belongs to the AB hydrolase superfamily. Hydroxynitrile lyase family. As to quaternary structure, homotetramer.

The enzyme catalyses a monosubstituted aliphatic (S)-hydroxynitrile = an aldehyde + hydrogen cyanide. The catalysed reaction is a disubstituted aliphatic (S)-hydroxynitrile = a ketone + hydrogen cyanide. It catalyses the reaction an aromatic (S)-hydroxynitrile = an aromatic aldehyde + hydrogen cyanide. It carries out the reaction 2-hydroxy-2-methylpropanenitrile = acetone + hydrogen cyanide. The enzyme catalyses butan-2-one + hydrogen cyanide = 2-hydroxy-2-methylbutanenitrile. The catalysed reaction is pentan-2-one + hydrogen cyanide = (2S)-2-hydroxy-2-methylpentanenitrile. It catalyses the reaction hexan-2-one + hydrogen cyanide = (2S)-2-hydroxy-2-methylhexanenitrile. It carries out the reaction heptan-2-one + hydrogen cyanide = (2S)-2-hydroxy-2-methylheptanenitrile. The enzyme catalyses 4-methylpentan-2-one + hydrogen cyanide = (2S)-2-hydroxy-2,4-dimethylpentanenitrile. The catalysed reaction is 3,3-dimethylbutan-2-one + hydrogen cyanide = (2S)-2-hydroxy-2-methyl-3,3-dimethylbutanenitrile. It catalyses the reaction acetophenone + hydrogen cyanide = (2S)-2-hydroxy-2-phenylpropanenitrile. It carries out the reaction propanal + hydrogen cyanide = (2S)-2-hydroxybutanenitrile. The enzyme catalyses pentanal + hydrogen cyanide = (2S)-2-hydroxyhexanenitrile. The catalysed reaction is 2-methylpropanal + hydrogen cyanide = (2S)-2-hydroxy-3-methylbutanenitrile. It catalyses the reaction 2,2-dimethylpropanal + hydrogen cyanide = (2S)-2-hydroxy-3,3-dimethylbutanenitrile. It carries out the reaction acrolein + hydrogen cyanide = (2S)-2-hydroxybut-3-enenitrile. The enzyme catalyses (2E)-but-2-enal + hydrogen cyanide = (2S,3E)-2-hydroxypent-3-enenitrile. The catalysed reaction is (E)-hex-2-enal + hydrogen cyanide = (2S,3E)-2-hydroxyhept-3-enenitrile. It catalyses the reaction cyclohexanecarbaldehyde + hydrogen cyanide = (2S)-2-cyclohexyl-2-hydroxyacetonitrile. It carries out the reaction benzaldehyde + hydrogen cyanide = (S)-mandelonitrile. The enzyme catalyses 4-methoxybenzaldehyde + hydrogen cyanide = (2S)-2-hydroxy-2-(4-methoxyphenyl)acetonitrile. The catalysed reaction is piperonal + hydrogen cyanide = (2S)-2-(2H-1,3-benzodioxol-5-yl)-2-hydroxyacetonitrile. It catalyses the reaction formylthiophene + hydrogen cyanide = (2R)-2-hydroxy-2-(thiophen-2-yl)acetonitrile. It carries out the reaction 3-formylthiophene + hydrogen cyanide = (2S)-2-hydroxy-2-(thiophen-3-yl)acetonitrile. The enzyme catalyses furan-3-carbaldehyde + hydrogen cyanide = (2S)-2-(furan-3-yl)-2-hydroxyacetonitrile. Functionally, involved in cyanogenesis, the release of HCN from cyanogenic glycosides in injured tissues; the release of toxic HCN is believed to play a central role in the defense mechanism of plants against herbivores and microbial attack. Decomposes a variety of cyanohydrins (alpha-hydroxynitriles) into HCN and the corresponding aldehydes or ketones; two natural substrates are 2-hydroxy-2-methylpropanenitrile (acetone cyanohydrin) and 2-hydroxy-2-methylbutanenitrile (2-butanone cyanohydrin), but in vitro can also act on 2-hydroxy-2-methylpentanenitrile (2-pentanone cyanohydrin) and mandelonitrile. Is also able to catalyze the reverse reaction in vitro, leading to the stereospecific synthesis of aliphatic, aromatic, and heterocyclic cyanohydrins, important intermediates in the production of various agrochemicals or pharmaceuticals. This chain is (S)-hydroxynitrile lyase, found in Manihot esculenta (Cassava).